Here is a 1685-residue protein sequence, read N- to C-terminus: Myomesin-1 (1685 aa).

A disordered region spans residues 33-80; sequence KKRSAVYTQGSTAYSSRSSAAHRRESEAFRRASASSSQQQASQHALSS. 2 stretches are compositionally biased toward low complexity: residues 41 to 51 and 63 to 80; these read QGSTAYSSRSS and RASA…ALSS. Ser-113 is subject to Phosphoserine. Residues 177 to 244 are disordered; it reads GITTSKQSTA…TSEKKSRKVV (68 aa). Residues 179-220 are compositionally biased toward low complexity; it reads TTSKQSTASKQTTASKQSTASKQSTASKQSTASRQSTASRQS. A run of 6 repeats spans residues 182–187, 188–193, 194–199, 200–205, 206–211, and 212–217. Residues 182–217 are 6 X 6 AA tandem repeats; it reads KQSTASKQTTASKQSTASKQSTASKQSTASRQSTAS. A compositionally biased stretch (polar residues) spans 221–233; it reads VVSKQATSALQQE. Ig-like C2-type domains follow at residues 277-368 and 396-498; these read PEFI…ASVV and PYGY…AYVF. Fibronectin type-III domains are found at residues 512 to 607, 640 to 734, and 741 to 834; these read APLD…ALDP, PPTD…VVGD, and APGK…VKAA. The tract at residues 840–938 is disordered; the sequence is SPDVCPALSD…TDRAPPSPPC (99 aa). The segment covering 874–888 has biased composition (low complexity); the sequence is LLGSKPNKPSLPSSS. Residues Ser-883 and Ser-887 each carry the phosphoserine modification. Over residues 889 to 902 the composition is skewed to polar residues; the sequence is QNLGQTEVSKVSET. The segment covering 920–931 has biased composition (basic and acidic residues); the sequence is SKSDPLKKKTDR. Fibronectin type-III domains follow at residues 933–1034 and 1041–1140; these read PPSP…CEEW and PPHS…TRPG. Ser-1054 carries the phosphoserine modification. 3 Ig-like C2-type domains span residues 1132-1230, 1358-1444, and 1573-1662; these read PVVA…EELK, PHFV…LKLV, and RVLG…FTVS. Cys-1160 and Cys-1210 are disulfide-bonded.

In terms of assembly, homodimer. Interacts with TTN/titin. Interacts with PNKD.

It is found in the cytoplasm. The protein localises to the myofibril. The protein resides in the sarcomere. Its subcellular location is the m line. Functionally, major component of the vertebrate myofibrillar M band. Binds myosin, titin, and light meromyosin. This binding is dose dependent. The protein is Myomesin-1 (MYOM1) of Homo sapiens (Human).